The chain runs to 70 residues: Large ribosomal subunit protein bL32 (70 aa).

Residues methionine 1–histidine 19 are compositionally biased toward basic residues. The interval methionine 1–alanine 21 is disordered.

It belongs to the bacterial ribosomal protein bL32 family.

The polypeptide is Large ribosomal subunit protein bL32 (Granulibacter bethesdensis (strain ATCC BAA-1260 / CGDNIH1)).